The primary structure comprises 249 residues: Probable phosphatase VVA0289 (249 aa).

Zn(2+) contacts are provided by His-8, His-10, His-16, His-41, Glu-74, His-102, His-132, Asp-194, and His-196.

Belongs to the PHP family. Zn(2+) is required as a cofactor.

This chain is Probable phosphatase VVA0289, found in Vibrio vulnificus (strain YJ016).